Here is a 361-residue protein sequence, read N- to C-terminus: Large ribosomal subunit protein uL3 (361 aa).

Basic residues predominate over residues 1–14 (MGRGGRRNPGRPRR). 2 disordered regions span residues 1 to 33 (MGRG…PRIR) and 337 to 361 (TSQQ…PASA).

The protein belongs to the universal ribosomal protein uL3 family. Part of the 50S ribosomal subunit. Forms a cluster with proteins L14 and L24e.

One of the primary rRNA binding proteins, it binds directly near the 3'-end of the 23S rRNA, where it nucleates assembly of the 50S subunit. The chain is Large ribosomal subunit protein uL3 from Methanopyrus kandleri (strain AV19 / DSM 6324 / JCM 9639 / NBRC 100938).